The sequence spans 78 residues: Putative membrane protein insertion efficiency factor (78 aa).

Belongs to the UPF0161 family.

The protein localises to the cell membrane. Functionally, could be involved in insertion of integral membrane proteins into the membrane. The sequence is that of Putative membrane protein insertion efficiency factor from Bacillus cereus (strain G9842).